Consider the following 706-residue polypeptide: MVNFSNKLTKDQIPGWEEYYFNYKMLKGRVNEYTEQTKEGTQYRRRVLKDFSKLLDDEIEKIVLFMIEQQGLIAARLEDLGKRRARLQDIPLLQEITELREDYRSVGLDLVTLLKFVELNANAVRKILKKFDERLGYKFTDYYVRSRSNHPYSQLQQVFRHVGIGAVVGALSRNLSDLEERQGSYLNIYDQHPLAIPKDPIIDLITATADKLTNSTNFLRFLGQHALIAQADSTAGTEDEQHVGEDEYHLMSLVLNLANTFLYMVNTYIVVPTADGYATSLGAAATACGAVIGSMAVAQVFSSVYFSAWSNRSYFRPLLFSSVVLLLGNVMYAMAFDLGSLTILLLGRVLCGMGSARAVNRRYISDCVPPRIRMQASAAFVSASALGMACGPALAGLLQTNFSLYGLTINQITLPGWIMAFGWLVYLIWLWILFQEPDLGPDVKDFYEGSSSSTSTRYMEQEKMEQGFTEHLLPSEQDEEDDNGDEEHNETLSSSTTTLRPASSVASAYTLLTPSVKVQLLIYFMLKYAMEILLAESSVVTGYYFGWDIGTVSVFLAVLGLSVLPVNAIVGTYISNMFEDRQILVASEMALLAGVMLSFKLTVEYTAAQYVCSAVLTFVSAEVVEGVNLSLLSRVMSARLSRGTYNGGLLSTEAGTVARVVADGTITAAGLLAGEGRLLNATLLPALLVCVASIAATLSTYNSLFY.

One can recognise an SPX domain in the interval Val-2–Arg-145. The next 6 membrane-spanning stretches (helical) occupy residues Met-251–Val-271, Leu-281–Phe-301, Leu-318–Leu-338, Ser-340–Val-359, Ala-378–Leu-398, and Leu-414–Phe-434. The interval Ser-475–Thr-498 is disordered. Over residues Glu-476 to His-488 the composition is skewed to acidic residues. 5 consecutive transmembrane segments (helical) span residues Leu-520–Val-540, Val-554–Ile-574, Ile-583–Val-603, Val-611–Leu-631, and Leu-678–Leu-698.

This sequence belongs to the major facilitator superfamily.

The protein resides in the membrane. The protein is SPX domain-containing membrane protein Os09g0521800 of Oryza sativa subsp. japonica (Rice).